A 1024-amino-acid polypeptide reads, in one-letter code: Multidrug resistance protein MdtC (1024 aa).

12 helical membrane-spanning segments follow: residues 3 to 23 (FLSL…ALVL), 333 to 353 (EVEQ…FAFL), 360 to 380 (LIPA…MYLC), 387 to 407 (LSLM…IVVL), 431 to 451 (VGFT…PLLM), 463 to 483 (FAIT…TLTP), 528 to 548 (WALL…ISMP), 853 to 873 (LWLI…LYES), 875 to 895 (VHPL…LLAL), 897 to 917 (LFNT…IGIV), 953 to 973 (PIIM…LSSG), and 984 to 1004 (ITIV…TPVV).

It belongs to the resistance-nodulation-cell division (RND) (TC 2.A.6) family. MdtC subfamily. In terms of assembly, part of a tripartite efflux system composed of MdtA, MdtB and MdtC. MdtC forms a heteromultimer with MdtB.

It is found in the cell inner membrane. The protein is Multidrug resistance protein MdtC of Erwinia amylovora (strain ATCC 49946 / CCPPB 0273 / Ea273 / 27-3).